A 514-amino-acid polypeptide reads, in one-letter code: Transmembrane protein 151B (514 aa).

The tract at residues 1–40 (MSAEGEPAEAVAETPANSPGEEAAAAAATTDVDVREEQRP) is disordered. Helical transmembrane passes span 57–77 (CLLLSILMFVCLGAVTWCQVT), 104–124 (YVYIPLAFLAMLYVVYLVECW), and 286–306 (PWYVSHYAFWVAALFMLSWPL).

The protein belongs to the TMEM151 family.

The protein localises to the membrane. The sequence is that of Transmembrane protein 151B (tmem151b) from Xenopus tropicalis (Western clawed frog).